Here is an 878-residue protein sequence, read N- to C-terminus: MQTANEIRRTFLDFFEKNGHTVVNSSPLVPRNDPTLMFTNAGMVQFKNVFTGIEKRDYVRAASSQKCVRAGGKHNDLDNVGYTARHHTFFEMLGNFSFGDYFKDLAIEHAWNLITKDFGIDKSRLLVTVYHDDDQAADAWKKIAGLPESRIIRIPTSDNFWAMGDTGPCGPCSEIFYDHGEHIFGGPPGSPDQDGDRFIEIWNLVFMQFEQVDKETRIPLPKPSIDTGMGLERLAALLQGKHDNYDVDLLRALIEASAEASNTDPDGPHKVSHRVVADHLRSSSFLIADGVLPSNEGRGYVLRRIMRRAMRHAHLMGCTEPLLHKLVPALTRQMGEAYPELVRANALITETLKLEETRFKVTLDKGLKLLDDEITRIGSGQKLAGEVAFKLYDTYGFPLDLTQDALKAKGIGVDTDGFASAMERQRAEARKAWAGSGDTATETVWFELREKLGASEFLGYDAEQAEGKIVALVENGKVVEAVHPGHQVAVIANQTPFYGESGGQMGDTGVITLGTPGTGGKATIAVTDTQKKLGDLIVHFGTVEGGPVAVGEDAHFAVESTRRDATRGHHSATHLLHAALRDILGDHVTQKGSQVGPDRLRFDFAHTKALSAEETRAVEAEVNRRIRLNAEVATKVMTPDDAIKAGAMALFGEKYGEEVRVVSMGDLSTELCGGTHANRTGDIGGFKIVAESAVASGVRRIEAVTGPAFLAWAQAQEDLLAKAADTLKAAPADLPARIAGLMDDRRKLERELAEVRKQLATGGGQGAATKTVNGITYAGKVLSGVPAKDLKGMADEIKKQIGSGIIALVSDADGKASIVVCVTEDLTSKHSAVDLVRIGSEALGGKGGGGRPDMAQAGGPDASAAQAAVDRIEQALGG.

The Zn(2+) site is built by His570, His574, Cys672, and His676. The tract at residues 844-864 (GGKGGGGRPDMAQAGGPDASA) is disordered. Over residues 855-864 (AQAGGPDASA) the composition is skewed to low complexity.

This sequence belongs to the class-II aminoacyl-tRNA synthetase family. It depends on Zn(2+) as a cofactor.

It localises to the cytoplasm. It carries out the reaction tRNA(Ala) + L-alanine + ATP = L-alanyl-tRNA(Ala) + AMP + diphosphate. Its function is as follows. Catalyzes the attachment of alanine to tRNA(Ala) in a two-step reaction: alanine is first activated by ATP to form Ala-AMP and then transferred to the acceptor end of tRNA(Ala). Also edits incorrectly charged Ser-tRNA(Ala) and Gly-tRNA(Ala) via its editing domain. The chain is Alanine--tRNA ligase from Paramagnetospirillum magneticum (strain ATCC 700264 / AMB-1) (Magnetospirillum magneticum).